The chain runs to 287 residues: Protease HtpX (287 aa).

A run of 2 helical transmembrane segments spans residues 4–24 (IFLL…VMSI) and 33–53 (GGLL…SLAI). His139 provides a ligand contact to Zn(2+). Glu140 is an active-site residue. Zn(2+) is bound at residue His143. 2 helical membrane-spanning segments follow: residues 154–174 (LIQG…AGII) and 195–215 (AVVF…VAYF). Glu220 contributes to the Zn(2+) binding site.

The protein belongs to the peptidase M48B family. It depends on Zn(2+) as a cofactor.

It is found in the cell inner membrane. In Shewanella baltica (strain OS185), this protein is Protease HtpX.